Reading from the N-terminus, the 159-residue chain is Ribosomal RNA large subunit methyltransferase H (159 aa).

S-adenosyl-L-methionine-binding positions include leucine 76, glycine 108, and phenylalanine 127–leucine 132.

The protein belongs to the RNA methyltransferase RlmH family. Homodimer.

It is found in the cytoplasm. It carries out the reaction pseudouridine(1915) in 23S rRNA + S-adenosyl-L-methionine = N(3)-methylpseudouridine(1915) in 23S rRNA + S-adenosyl-L-homocysteine + H(+). Functionally, specifically methylates the pseudouridine at position 1915 (m3Psi1915) in 23S rRNA. The protein is Ribosomal RNA large subunit methyltransferase H of Streptococcus suis (strain 05ZYH33).